Here is a 203-residue protein sequence, read N- to C-terminus: MQILLATVAAYLIGSVSFAVVVSAAMGLADPRSYGSKNPGATNVLRSGNKKAAILTLVGDAFKGWLAVWLVKRFGIGGEIGVALAAIAVFLGHLYPVFFRFQGGKGVATAAGVLLAVHPVLGLATALTWLIVAFFFRYSSLAALVAAVFAPIFDVFLFGTRDNPVAWAVLAMSVLLIWRHRSNISKLLAGEESRIGQKKKTGA.

6 consecutive transmembrane segments (helical) span residues Ile3–Ser23, Lys51–Val71, Phe74–Leu94, Ala116–Phe136, Ser140–Thr160, and Pro164–Trp178.

The protein belongs to the PlsY family. As to quaternary structure, probably interacts with PlsX.

The protein localises to the cell inner membrane. It catalyses the reaction an acyl phosphate + sn-glycerol 3-phosphate = a 1-acyl-sn-glycero-3-phosphate + phosphate. It functions in the pathway lipid metabolism; phospholipid metabolism. Its function is as follows. Catalyzes the transfer of an acyl group from acyl-phosphate (acyl-PO(4)) to glycerol-3-phosphate (G3P) to form lysophosphatidic acid (LPA). This enzyme utilizes acyl-phosphate as fatty acyl donor, but not acyl-CoA or acyl-ACP. The chain is Glycerol-3-phosphate acyltransferase from Burkholderia pseudomallei (strain K96243).